The primary structure comprises 622 residues: Chaperone protein HscA homolog (622 aa).

It belongs to the heat shock protein 70 family.

In terms of biological role, chaperone involved in the maturation of iron-sulfur cluster-containing proteins. Has a low intrinsic ATPase activity which is markedly stimulated by HscB. In Acidovorax sp. (strain JS42), this protein is Chaperone protein HscA homolog.